Here is a 411-residue protein sequence, read N- to C-terminus: Corticotropin-releasing factor receptor 2 (411 aa).

The segment at residues 1–19 is a signal peptide (not cleaved); it reads MDAALLLSLLEANCSLALA. Topologically, residues 1 to 108 are extracellular; that stretch reads MDAALLLSLL…EPILDDKQRK (108 aa). N-linked (GlcNAc...) asparagine glycans are attached at residues Asn-13, Asn-41, Asn-74, Asn-86, and Asn-94. 3 disulfide bridges follow: Cys-14-Cys-50, Cys-40-Cys-83, and Cys-64-Cys-98. The helical transmembrane segment at 109–139 threads the bilayer; the sequence is YDLHYRIALIVNYLGHCVSVVALVAAFLLFL. The Cytoplasmic segment spans residues 140–146; it reads VLRSIRC. A helical transmembrane segment spans residues 147–171; sequence LRNVIHWNLITTFILRNIAWFLLQL. Residues 172-185 lie on the Extracellular side of the membrane; sequence IDHEVHEGNEVWCR. A disulfide bond links Cys-184 and Cys-254. Residues 186–214 form a helical membrane-spanning segment; the sequence is CITTIFNYFVVTNFFWMFVEGCYLHTAIV. The Cytoplasmic portion of the chain corresponds to 215 to 221; that stretch reads MTYSTEH. Residues 222-249 traverse the membrane as a helical segment; it reads LRKWLFLFIGWCIPCPIIIAWAVGKLYY. Residues 250-265 lie on the Extracellular side of the membrane; it reads ENEQCWFGKEAGDLVD. The chain crosses the membrane as a helical span at residues 266-291; the sequence is YIYQGPVMLVLLINFVFLFNIVRILM. Residues 292–302 lie on the Cytoplasmic side of the membrane; sequence TKLRASTTSET. Residues 303 to 327 form a helical membrane-spanning segment; that stretch reads IQYRKAVKATLVLLPLLGITYMLFF. Over 328 to 334 the chain is Extracellular; that stretch reads VNPGEDD. Residues 335–364 traverse the membrane as a helical segment; it reads LSQIVFIYFNSFLQSFQGFFVSVFYCFFNG. At 365-411 the chain is on the cytoplasmic side; that stretch reads EVRAALRKRWHRWQDHHALRVPVARAMSIPTSPTRISFHSIKQTAAV.

The protein belongs to the G-protein coupled receptor 2 family. In terms of assembly, monomer. Interacts with CRF, UCN, UCN2 and UCN3. An N-glycosylation site within the signal peptide impedes its proper cleavage and function. Highly expressed in the heart. Also expressed in lungs, skeletal muscle, gastrointestinal tract, epididymis, and brain.

The protein resides in the cell membrane. G-protein coupled receptor for CRH (corticotropin-releasing factor), UCN (urocortin), UCN2 and UCN3. Has high affinity for UCN. Ligand binding causes a conformation change that triggers signaling via guanine nucleotide-binding proteins (G proteins) and down-stream effectors, such as adenylate cyclase. Promotes the activation of adenylate cyclase, leading to increased intracellular cAMP levels. The polypeptide is Corticotropin-releasing factor receptor 2 (Crhr2) (Mus musculus (Mouse)).